Reading from the N-terminus, the 442-residue chain is MNIFDHQIKNVDKGNVVAILGAQWGDEGKGKIIDMLSEYSDITCRFNGGANAGHTISVNDKKYALHLLPCGVLYDNNISVLGNGMVIHVKSLMEEIESVGGKLLDRLYLSNKAHILFDIHQIIDSIQETKKLKEGKQIGTTKRGIGPCYSTKASRIGIRLGTLKNFENFKNMYSKLIDHLMDLYNITEYDKEKELNLFYNYHIKLRDRIVDVISFMNTNLENNKKVLIEGANAAMLDIDFGTYPYVTSSCTTVGGVFSGLGIHHKKLNLVVGVVKSYLTRVGCGPFLTELNNDVGQYLREKGHEYGTTTKRPRRCGWLDIPMLLYVKCINSIDMINLTKLDVLSGLEEILLCVNFKNKKTGELLEKGCYPVEEEISEEYEPVYEKFSGWKEDISTCNEFDELPENAKKYILAIEKYLKTPIVWIGVGPNRKNMIVKKNFNLN.

GTP contacts are provided by residues 25–31 (GDEGKGK), 53–55 (GHT), and Lys-62. Asp-26 (proton acceptor) is an active-site residue. Positions 26 and 53 each coordinate Mg(2+). Residues 26–29 (DEGK) and 51–54 (NAGH) contribute to the IMP site. The active-site Proton donor is the His-54. Residues Thr-141, Arg-155, Asn-232, and Thr-247 each coordinate IMP. Thr-307 provides a ligand contact to GTP. 307–313 (TTTKRPR) provides a ligand contact to substrate. An IMP-binding site is contributed by Arg-311. Residues Arg-313, 339–341 (KLD), and 425–427 (GVG) contribute to the GTP site.

This sequence belongs to the adenylosuccinate synthetase family. As to quaternary structure, homodimer. Requires Mg(2+) as cofactor.

Its subcellular location is the cytoplasm. The catalysed reaction is IMP + L-aspartate + GTP = N(6)-(1,2-dicarboxyethyl)-AMP + GDP + phosphate + 2 H(+). It functions in the pathway purine metabolism; AMP biosynthesis via de novo pathway; AMP from IMP: step 1/2. Its activity is regulated as follows. Inhibited by hadacidin. Activated by fructose 1,6-bisphosphate. Functionally, plays an important role in the salvage pathway for purine nucleotide biosynthesis. Catalyzes the first committed step in the biosynthesis of AMP from IMP. This Plasmodium falciparum protein is Adenylosuccinate synthetase (Adss).